The following is a 338-amino-acid chain: Glyceraldehyde-3-phosphate dehydrogenase (338 aa).

NAD(+) contacts are provided by residues 11–12 (TI) and Gly111. 140-142 (SCN) contacts D-glyceraldehyde 3-phosphate. The Nucleophile role is filled by Cys141. Arg169 provides a ligand contact to NAD(+). 195 to 196 (HG) provides a ligand contact to D-glyceraldehyde 3-phosphate. Gln302 provides a ligand contact to NAD(+).

The protein belongs to the glyceraldehyde-3-phosphate dehydrogenase family. Homotetramer.

The protein resides in the cytoplasm. The enzyme catalyses D-glyceraldehyde 3-phosphate + phosphate + NADP(+) = (2R)-3-phospho-glyceroyl phosphate + NADPH + H(+). It carries out the reaction D-glyceraldehyde 3-phosphate + phosphate + NAD(+) = (2R)-3-phospho-glyceroyl phosphate + NADH + H(+). The protein operates within carbohydrate degradation; glycolysis; pyruvate from D-glyceraldehyde 3-phosphate: step 1/5. In Methanobacterium formicicum, this protein is Glyceraldehyde-3-phosphate dehydrogenase (gap).